Consider the following 217-residue polypeptide: UPF0111 protein MTH_1689 (217 aa).

The protein belongs to the UPF0111 family.

This Methanothermobacter thermautotrophicus (strain ATCC 29096 / DSM 1053 / JCM 10044 / NBRC 100330 / Delta H) (Methanobacterium thermoautotrophicum) protein is UPF0111 protein MTH_1689.